Reading from the N-terminus, the 111-residue chain is NADH-ubiquinone oxidoreductase chain 3 (111 aa).

3 helical membrane passes run Met-1–Gly-21, Phe-56–Ile-76, and Leu-84–Tyr-104.

The protein belongs to the complex I subunit 3 family.

The protein resides in the mitochondrion membrane. It catalyses the reaction a ubiquinone + NADH + 5 H(+)(in) = a ubiquinol + NAD(+) + 4 H(+)(out). Its function is as follows. Core subunit of the mitochondrial membrane respiratory chain NADH dehydrogenase (Complex I) that is believed to belong to the minimal assembly required for catalysis. Complex I functions in the transfer of electrons from NADH to the respiratory chain. The immediate electron acceptor for the enzyme is believed to be ubiquinone. This chain is NADH-ubiquinone oxidoreductase chain 3 (ND3), found in Ascaris suum (Pig roundworm).